A 631-amino-acid chain; its full sequence is Clathrin interactor 1 (631 aa).

One can recognise an ENTH domain in the interval 24-157 (NVVMNYSEIE…QDDDRLREER (134 aa)). Arg37 serves as a coordination point for a 1,2-diacyl-sn-glycero-3-phospho-(1D-myo-inositol-4,5-bisphosphate). Residues 60–62 (FMY) form an interaction with VTI1B region. Arg75 contributes to the a 1,2-diacyl-sn-glycero-3-phospho-(1D-myo-inositol-4,5-bisphosphate) binding site. 2 interaction with VTI1B regions span residues 102-104 (SER) and 150-161 (DDRLREERKKAK). A phosphoserine mark is found at Ser171, Ser174, Ser213, Ser218, Ser235, Ser253, and Ser307. The tract at residues 227–339 (FRRKDREDSP…SSGDLVDLFD (113 aa)) is disordered. The segment covering 230 to 247 (KDREDSPERCSDSDEEKK) has biased composition (basic and acidic residues). Over residues 308–318 (PDQNASTHTPQ) the composition is skewed to polar residues. At Thr316 the chain carries Phosphothreonine. The segment covering 319–331 (SSAKPSVPSSKSS) has biased composition (low complexity). Phosphoserine is present on residues Ser320 and Ser630.

This sequence belongs to the epsin family. Binds clathrin heavy chain and AP-2. Interacts with VTI1B. Interacts with GGA2 (via GAE domain). Interacts with AP1G1 (via GAE domain). Interacts with AP1G2 (via GAE domain).

The protein localises to the cytoplasm. It localises to the perinuclear region. The protein resides in the membrane. Its subcellular location is the cytoplasmic vesicle. It is found in the clathrin-coated vesicle. Functionally, binds to membranes enriched in phosphatidylinositol 4,5-bisphosphate (PtdIns(4,5)P2). May have a role in transport via clathrin-coated vesicles from the trans-Golgi network to endosomes. Stimulates clathrin assembly. This is Clathrin interactor 1 (Clint1) from Mus musculus (Mouse).